A 542-amino-acid chain; its full sequence is MTVMEHTKAAQIDLAQYGITGVTELVRNPSYEMLFAEETRSDLEGYERGVVTELGAVAVDTGIFTGRSPKDKFIVKDDTTRDTLWWTSDKAKNDNKPINQEVWNDLKALVTKQLSGKRVFVLDGYCGANADTRLSVRFITEVAWQAHFVKNMFIRPSEEELAHFKPDFVVMNGAKCTNAKWKEHGLNSENFTVFNLTERMQLIGGTWYGGEMKKGMFAMMNYFLPLQGIASMHCSANMGKAGDVAIFFGLSGTGKTTLSTDPKRALIGDDEHGWDDDGVFNFEGGCYAKTIKLSKEAEPDIYNAIRRDALLENVTVRSDGSIDFDDGSKTENTRVSYPIYHIDNIVKPVSKGGHATKVIFLSADAFGVLPPVSKLTPEQTKYHFLSGFTAKLAGTERGITEPTPTFSACFGAAFLTLHPTQYAEVLVKRMEAAGAEAYLVNTGWNGSGKRISIKDTRGIIDAILDGSIEKAETKHIPIFNLQVPTALPGVDPMILDPRDTYVDPLQWESKAKDLATRFINNFDKYTDNAEGKALVAAGPKLD.

Substrate contacts are provided by Arg67, Tyr208, and Lys214. ATP is bound by residues Lys214, His233, and 249–257 (GLSGTGKTT). The Mn(2+) site is built by Lys214 and His233. Asp270 serves as a coordination point for Mn(2+). ATP contacts are provided by residues Glu298, Arg334, 450 to 451 (RI), and Thr456. Residue Arg334 participates in substrate binding.

Belongs to the phosphoenolpyruvate carboxykinase (ATP) family. As to quaternary structure, monomer. Mn(2+) serves as cofactor.

The protein resides in the cytoplasm. The catalysed reaction is oxaloacetate + ATP = phosphoenolpyruvate + ADP + CO2. It functions in the pathway carbohydrate biosynthesis; gluconeogenesis. Its function is as follows. Involved in the gluconeogenesis. Catalyzes the conversion of oxaloacetate (OAA) to phosphoenolpyruvate (PEP) through direct phosphoryl transfer between the nucleoside triphosphate and OAA. This chain is Phosphoenolpyruvate carboxykinase (ATP), found in Vibrio cholerae serotype O1 (strain ATCC 39541 / Classical Ogawa 395 / O395).